We begin with the raw amino-acid sequence, 185 residues long: Ribosome-recycling factor (185 aa).

The protein belongs to the RRF family.

The protein localises to the cytoplasm. Its function is as follows. Responsible for the release of ribosomes from messenger RNA at the termination of protein biosynthesis. May increase the efficiency of translation by recycling ribosomes from one round of translation to another. The protein is Ribosome-recycling factor of Desulfosudis oleivorans (strain DSM 6200 / JCM 39069 / Hxd3) (Desulfococcus oleovorans).